We begin with the raw amino-acid sequence, 403 residues long: 4-hydroxyphenylpyruvate dioxygenase (403 aa).

2 VOC domains span residues 25–169 and 201–359; these read GYDH…LVER and RIDH…LFTK. Fe cation contacts are provided by H204, H287, and E370.

The protein belongs to the 4HPPD family. In terms of assembly, homodimer. The cofactor is Fe cation.

The catalysed reaction is 3-(4-hydroxyphenyl)pyruvate + O2 = homogentisate + CO2. It functions in the pathway amino-acid degradation; L-phenylalanine degradation; acetoacetate and fumarate from L-phenylalanine: step 3/6. Its function is as follows. 4-hydroxyphenylpyruvate dioxygenase; part of the L-tyrosine degradation gene cluster that mediates the biosynthesis of the brownish pigment pyomelanin as an alternative melanin. The 4-hydroxyphenylpyruvate dioxygenase hppD catalyzes the conversion of 4-hydroxyphenylpyruvate to homogentisic acid (HGA). The protein hmgX is crucial for this conversion and thus, probably functions as an accessory factor to mediate specific activity of hppD. The homogentisate 1,2-dioxygenase hmgA is then involved in the cleavage of the aromatic ring of HGA and its conversion to 4-maleylacetoacetate. When hmgA activity is lowered by the cell wall integrity (CWI) signaling pathway, HGA accumulates and leads to the production of pyomelanin through benzoquinone acetic acid after oxidation and polymerization. On the opposite, in non-stress conditions, both hppD and hmgA activities are balanced and HGA is degraded into 4-maleylacetoacetate. 4-maleylacetoacetate is further converted to 4-fumarylacetoacetate by the maleylacetoacetate isomerase maiA, which is degraded into fumarate and acetoacetate by the fumarylacetoacetase fahA. This Aspergillus fumigatus (strain ATCC MYA-4609 / CBS 101355 / FGSC A1100 / Af293) (Neosartorya fumigata) protein is 4-hydroxyphenylpyruvate dioxygenase.